The primary structure comprises 621 residues: 1-deoxy-D-xylulose-5-phosphate synthase (621 aa).

Residues H80 and 121 to 123 each bind thiamine diphosphate; that span reads GHS. Position 152 (D152) interacts with Mg(2+). Thiamine diphosphate-binding positions include 153–154, N181, Y288, and E370; that span reads GA. N181 is a Mg(2+) binding site.

Belongs to the transketolase family. DXPS subfamily. As to quaternary structure, homodimer. The cofactor is Mg(2+). It depends on thiamine diphosphate as a cofactor.

The enzyme catalyses D-glyceraldehyde 3-phosphate + pyruvate + H(+) = 1-deoxy-D-xylulose 5-phosphate + CO2. It participates in metabolic intermediate biosynthesis; 1-deoxy-D-xylulose 5-phosphate biosynthesis; 1-deoxy-D-xylulose 5-phosphate from D-glyceraldehyde 3-phosphate and pyruvate: step 1/1. Catalyzes the acyloin condensation reaction between C atoms 2 and 3 of pyruvate and glyceraldehyde 3-phosphate to yield 1-deoxy-D-xylulose-5-phosphate (DXP). This is 1-deoxy-D-xylulose-5-phosphate synthase from Erwinia tasmaniensis (strain DSM 17950 / CFBP 7177 / CIP 109463 / NCPPB 4357 / Et1/99).